A 427-amino-acid chain; its full sequence is MLDIKWIRENADVLDSALAKRGAGPLSASLIALDERRRTILQSLQDMQSRRNAASKEIGAAMAQKNSELADRLKAEVAELKTTLPAAEEESRRIEAELTDALSRIPNAPLDDVPVGADESANVVTRVVGAKPTWNHKPLEHFEIGEALGLMDFEGAARIAGSRFTILKGQLARLERALGQFMLDLHTGEHGYIEVQPPLLVRDDAMYGTGQLPKFTDDLFRTTDGRWLIPTAEVPLTNMVREQILDGEKLPLRFTALTPCFRSEAGSAGRDTRGMLRQHQFNKVELVSITDAESALDEHERMTACAEEVLKRLGLHYRVMTLCTGDMGFSARKTYDLEVWLPGQDAYREISSCSVCGDFQGRRMNARYRGKEEKGTKFAHTLNGSGVALGRALIAVIENYLNEDGSITVPDALIAYMGGLRRIEKAA.

L-serine is bound at residue 231–233 (TAE). 262–264 (RSE) lines the ATP pocket. An L-serine-binding site is contributed by Glu-285. 349–352 (EISS) contacts ATP. L-serine is bound at residue Ser-385.

It belongs to the class-II aminoacyl-tRNA synthetase family. Type-1 seryl-tRNA synthetase subfamily. As to quaternary structure, homodimer. The tRNA molecule binds across the dimer.

The protein resides in the cytoplasm. The catalysed reaction is tRNA(Ser) + L-serine + ATP = L-seryl-tRNA(Ser) + AMP + diphosphate + H(+). It catalyses the reaction tRNA(Sec) + L-serine + ATP = L-seryl-tRNA(Sec) + AMP + diphosphate + H(+). It participates in aminoacyl-tRNA biosynthesis; selenocysteinyl-tRNA(Sec) biosynthesis; L-seryl-tRNA(Sec) from L-serine and tRNA(Sec): step 1/1. Functionally, catalyzes the attachment of serine to tRNA(Ser). Is also able to aminoacylate tRNA(Sec) with serine, to form the misacylated tRNA L-seryl-tRNA(Sec), which will be further converted into selenocysteinyl-tRNA(Sec). In Sinorhizobium medicae (strain WSM419) (Ensifer medicae), this protein is Serine--tRNA ligase.